The chain runs to 131 residues: Large ribosomal subunit protein bL17 (131 aa).

This sequence belongs to the bacterial ribosomal protein bL17 family. As to quaternary structure, part of the 50S ribosomal subunit. Contacts protein L32.

The polypeptide is Large ribosomal subunit protein bL17 (Thermotoga neapolitana (strain ATCC 49049 / DSM 4359 / NBRC 107923 / NS-E)).